The following is a 660-amino-acid chain: Bifunctional polymyxin resistance protein ArnA (660 aa).

The formyltransferase ArnAFT stretch occupies residues 1–304 (MKAVIFAYHD…TLGLVAGACL (304 aa)). His-104 serves as the catalytic Proton donor; for formyltransferase activity. Residues Arg-114 and 136–140 (VKRAD) contribute to the (6R)-10-formyltetrahydrofolate site. The tract at residues 314–660 (RRIRVLILGV…RSVDIAERAS (347 aa)) is dehydrogenase ArnADH. NAD(+) contacts are provided by residues Asp-347 and 368-369 (DI). Residues Ala-393, Tyr-398, and 432–433 (TS) contribute to the UDP-alpha-D-glucuronate site. The Proton acceptor; for decarboxylase activity role is filled by Glu-434. Residues Arg-460, Asn-492, 526 to 535 (KLIDGGQQKR), and Tyr-613 each bind UDP-alpha-D-glucuronate. Arg-619 functions as the Proton donor; for decarboxylase activity in the catalytic mechanism.

In the N-terminal section; belongs to the Fmt family. UDP-L-Ara4N formyltransferase subfamily. This sequence in the C-terminal section; belongs to the NAD(P)-dependent epimerase/dehydratase family. UDP-glucuronic acid decarboxylase subfamily. In terms of assembly, homohexamer, formed by a dimer of trimers.

The catalysed reaction is UDP-alpha-D-glucuronate + NAD(+) = UDP-beta-L-threo-pentopyranos-4-ulose + CO2 + NADH. The enzyme catalyses UDP-4-amino-4-deoxy-beta-L-arabinose + (6R)-10-formyltetrahydrofolate = UDP-4-deoxy-4-formamido-beta-L-arabinose + (6S)-5,6,7,8-tetrahydrofolate + H(+). It participates in nucleotide-sugar biosynthesis; UDP-4-deoxy-4-formamido-beta-L-arabinose biosynthesis; UDP-4-deoxy-4-formamido-beta-L-arabinose from UDP-alpha-D-glucuronate: step 1/3. The protein operates within nucleotide-sugar biosynthesis; UDP-4-deoxy-4-formamido-beta-L-arabinose biosynthesis; UDP-4-deoxy-4-formamido-beta-L-arabinose from UDP-alpha-D-glucuronate: step 3/3. It functions in the pathway bacterial outer membrane biogenesis; lipopolysaccharide biosynthesis. Functionally, bifunctional enzyme that catalyzes the oxidative decarboxylation of UDP-glucuronic acid (UDP-GlcUA) to UDP-4-keto-arabinose (UDP-Ara4O) and the addition of a formyl group to UDP-4-amino-4-deoxy-L-arabinose (UDP-L-Ara4N) to form UDP-L-4-formamido-arabinose (UDP-L-Ara4FN). The modified arabinose is attached to lipid A and is required for resistance to polymyxin and cationic antimicrobial peptides. This is Bifunctional polymyxin resistance protein ArnA from Salmonella paratyphi A (strain ATCC 9150 / SARB42).